A 277-amino-acid chain; its full sequence is Phosphate import ATP-binding protein PstB 1 (277 aa).

The ABC transporter domain maps to 27-272 (LRVRDLAVSY…PSHELTAAYI (246 aa)). 59–66 (GPSGCGKT) is an ATP binding site.

The protein belongs to the ABC transporter superfamily. Phosphate importer (TC 3.A.1.7) family. As to quaternary structure, the complex is composed of two ATP-binding proteins (PstB), two transmembrane proteins (PstC and PstA) and a solute-binding protein (PstS).

It is found in the cell inner membrane. The catalysed reaction is phosphate(out) + ATP + H2O = ADP + 2 phosphate(in) + H(+). Functionally, part of the ABC transporter complex PstSACB involved in phosphate import. Responsible for energy coupling to the transport system. This chain is Phosphate import ATP-binding protein PstB 1, found in Nitrosococcus oceani (strain ATCC 19707 / BCRC 17464 / JCM 30415 / NCIMB 11848 / C-107).